We begin with the raw amino-acid sequence, 345 residues long: Phosphate acyltransferase (345 aa).

It belongs to the PlsX family. Homodimer. Probably interacts with PlsY.

It is found in the cytoplasm. The catalysed reaction is a fatty acyl-[ACP] + phosphate = an acyl phosphate + holo-[ACP]. It functions in the pathway lipid metabolism; phospholipid metabolism. In terms of biological role, catalyzes the reversible formation of acyl-phosphate (acyl-PO(4)) from acyl-[acyl-carrier-protein] (acyl-ACP). This enzyme utilizes acyl-ACP as fatty acyl donor, but not acyl-CoA. In Chromobacterium violaceum (strain ATCC 12472 / DSM 30191 / JCM 1249 / CCUG 213 / NBRC 12614 / NCIMB 9131 / NCTC 9757 / MK), this protein is Phosphate acyltransferase.